Reading from the N-terminus, the 662-residue chain is MNFPWDQLLVKGNWMIISAQIAAPFLVIGLIAVISYFKLWKYLYKEWFTSVDHKKIGIMYLISAVLMFVRGGIDALMLRTQLTIPDNKFLEANHYNEVFTTHGVIMIIFMAMPFIFGLWNVVIPLQLGARDVAFPVMNNVSFWLFFAGMILFNLSFIVGGSPAAGWTNYAPLAGEFSPGPGVNYYLIAIQISGIGSLMTGINFFVTILRCKTPTMKFMQMPMFSVTTFITTLIVILAFPVFTVALALMTADRIFGTQFFTVANGGMPMLWANFFWVWGHPEVYIVILPAFGMYSEIIPTFARKRLFGHQSMIWATAGIAFLSFLVWVHHFFTMGNGALINSFFSISTMLIGVPTGVKLFNWLLTLYKGRITFESPMLFSLAFIPNFLLGGVTGVMLAMASADYQYHNTYFLVAHFHYTLVTGVVFACLAGLIFWYPKMMGYKLNETLNKWCFWFFMIGFNVCFLPQFILGLDGMPRRLYTYMPSDGWWLLNFISTIGAVLMAIGFLFLVASIVYSHIKAPREATGDNWDGLGRTLEWSTASAIPPKYNFAITPDWNDYDTFVDMKEHGRHYLDNHNYKDIHMPNNTPVGFWMGIFMTIGGFFLIFESIVPALICLAGIFITMIWRSFQIDHGYHIPASEVAETEARLREARIKEREAVSHES.

A run of 2 helical transmembrane segments spans residues 14-34 (WMII…IAVI) and 56-76 (IGIM…IDAL). H102 is a binding site for Fe(II)-heme a. 8 consecutive transmembrane segments (helical) span residues 103 to 123 (GVIM…NVVI), 140 to 160 (VSFW…IVGG), 187 to 207 (IAIQ…FVTI), 228 to 248 (FITT…LALM), 273 to 293 (FFWV…FGMY), 311 to 331 (MIWA…HHFF), 336 to 356 (GALI…PTGV), and 376 to 396 (MLFS…GVML). H279, Y283, H328, and H329 together coordinate Cu cation. Residues 279-283 (HPEVY) constitute a cross-link (1'-histidyl-3'-tyrosine (His-Tyr)). H414 is a heme a3 binding site. 5 consecutive transmembrane segments (helical) span residues 415 to 435 (FHYT…IFWY), 451 to 471 (CFWF…ILGL), 492 to 512 (FIST…VASI), 587 to 604 (PVGF…FFLI), and 608 to 627 (IVPA…WRSF). Fe(II)-heme a is bound at residue H416.

It belongs to the heme-copper respiratory oxidase family. It depends on Cu cation as a cofactor. Requires ferriheme a as cofactor. The cofactor is Heme A3..

The protein resides in the cell membrane. The enzyme catalyses 2 a quinol + O2 = 2 a quinone + 2 H2O. The protein operates within energy metabolism; oxidative phosphorylation. Functionally, catalyzes quinol oxidation with the concomitant reduction of oxygen to water. The sequence is that of Probable quinol oxidase subunit 1 (qoxB) from Staphylococcus epidermidis (strain ATCC 35984 / DSM 28319 / BCRC 17069 / CCUG 31568 / BM 3577 / RP62A).